A 188-amino-acid chain; its full sequence is Ribosome maturation factor RimM (188 aa).

The region spanning 112–187 (SDSYYWVDLI…LLTLDWQSDW (76 aa)) is the PRC barrel domain.

Belongs to the RimM family. As to quaternary structure, binds ribosomal protein uS19.

It localises to the cytoplasm. Functionally, an accessory protein needed during the final step in the assembly of 30S ribosomal subunit, possibly for assembly of the head region. Essential for efficient processing of 16S rRNA. May be needed both before and after RbfA during the maturation of 16S rRNA. It has affinity for free ribosomal 30S subunits but not for 70S ribosomes. The chain is Ribosome maturation factor RimM from Polynucleobacter asymbioticus (strain DSM 18221 / CIP 109841 / QLW-P1DMWA-1) (Polynucleobacter necessarius subsp. asymbioticus).